The chain runs to 248 residues: N-acylneuraminate-9-phosphatase (248 aa).

A Mg(2+)-binding site is contributed by D12. Phosphate-binding residues include L13, D14, T131, N132, and K164. D14 lines the Mg(2+) pocket. D189 contributes to the Mg(2+) binding site.

The protein belongs to the HAD-like hydrolase superfamily. NANP family. Requires Mg(2+) as cofactor.

The catalysed reaction is N-acetylneuraminate 9-phosphate + H2O = N-acetylneuraminate + phosphate. It catalyses the reaction N-glycoloylneuraminate 9-phosphate + H2O = N-glycoloylneuraminate + phosphate. Its pathway is amino-sugar metabolism; N-acetylneuraminate biosynthesis. Inhibited by calcium. Inhibited by vanadate, sodium orthovanate and phosphonate. In terms of biological role, catalyzes the dephosphorylation of N-acylneuraminate 9-phosphate (Neu5Ac-9-P) to sialic acid N-acetylneuraminic acid (Neu5Ac). May also use N-glycoloylneuraminate 9-phosphate as substrate. The chain is N-acylneuraminate-9-phosphatase from Mus musculus (Mouse).